We begin with the raw amino-acid sequence, 475 residues long: Aspartyl/glutamyl-tRNA(Asn/Gln) amidotransferase subunit B (475 aa).

It belongs to the GatB/GatE family. GatB subfamily. Heterotrimer of A, B and C subunits.

The enzyme catalyses L-glutamyl-tRNA(Gln) + L-glutamine + ATP + H2O = L-glutaminyl-tRNA(Gln) + L-glutamate + ADP + phosphate + H(+). It carries out the reaction L-aspartyl-tRNA(Asn) + L-glutamine + ATP + H2O = L-asparaginyl-tRNA(Asn) + L-glutamate + ADP + phosphate + 2 H(+). Its function is as follows. Allows the formation of correctly charged Asn-tRNA(Asn) or Gln-tRNA(Gln) through the transamidation of misacylated Asp-tRNA(Asn) or Glu-tRNA(Gln) in organisms which lack either or both of asparaginyl-tRNA or glutaminyl-tRNA synthetases. The reaction takes place in the presence of glutamine and ATP through an activated phospho-Asp-tRNA(Asn) or phospho-Glu-tRNA(Gln). This is Aspartyl/glutamyl-tRNA(Asn/Gln) amidotransferase subunit B from Thiobacillus denitrificans (strain ATCC 25259 / T1).